Consider the following 2382-residue polypeptide: Highly reducing polyketide synthase srdA (2382 aa).

The tract at residues 1–25 is disordered; that stretch reads MAPHSTLDSDYSSGSSTPTSASAAG. In terms of domain architecture, Ketosynthase family 3 (KS3) spans 44–474; the sequence is QEPIAIIGMG…GANAHAILEA (431 aa). Residues Cys-217, His-352, and His-390 each act as for beta-ketoacyl synthase activity in the active site. Residues 580 to 891 are malonyl-CoA:ACP transacylase (MAT) domain; that stretch reads VFTGQGAQWP…HYGSALSRGK (312 aa). The active-site For malonyltransferase activity is Ser-672. The interval 971 to 1108 is N-terminal hotdog fold; the sequence is HDLLGSQVHG…GLVKIDSAPA (138 aa). Residues 971-1274 are dehydratase (DH) domain; the sequence is HDLLGSQVHG…RQVSYQSGIQ (304 aa). The 305-residue stretch at 971-1275 folds into the PKS/mFAS DH domain; that stretch reads HDLLGSQVHG…QVSYQSGIQQ (305 aa). His-1003 serves as the catalytic Proton acceptor; for dehydratase activity. A C-terminal hotdog fold region spans residues 1121–1275; the sequence is MEPQAPRTWY…QVSYQSGIQQ (155 aa). Asp-1189 functions as the Proton donor; for dehydratase activity in the catalytic mechanism. An enoyl reductase (ER) domain region spans residues 1668–1979; the sequence is GQIDSIFFRR…AKGHSGSVVV (312 aa). Residues 2004 to 2180 are ketoreductase (KR) domain; that stretch reads SYLLVGCLGG…ATSIGLGMIS (177 aa). A Carrier domain is found at 2298–2376; sequence SVEDAVLKMI…LLSELITKKM (79 aa). Ser-2335 bears the O-(pantetheine 4'-phosphoryl)serine mark.

Highly reducing polyketide synthase; part of the gene cluster that mediates the biosynthesis of sordarial, a salicylic aldehyde structurally related to the phytotoxin pyriculol. The most interesting aspect of this pathway is formation of an aromatic product from the highly reducing polyketide synthase srdA. SrdA synthesizes a reduced polyketide chain from one molecule of acetyl-CoA and five molecules of malonyl-CoA. The polyketide chain is then reductively released as an aldehyde. The oxidoreductases srdC, srdD and srdE then oxidize one of the hydroxy groups to facilitate the intramolecular aldol condensation, followed by dehydration to yield a salicylic aldehyde. This aldehyde can undergo facile reduction by endogenous reductases to yield the alcohol 1-hydroxy-2-hydroxymethyl-3-pent-1,3-dienylbenzene. The flavin-dependent srdI counteract against the propensity of the aldehydes to be reduced under physiological conditions and is responsible for reoxidizing 1-hydroxy-2-hydroxymethyl-3-pent-1,3-dienylbenzene back to the salicylic aldehyde. This salicylic aldehyde is then selectively epoxidized by the cupin-domain-containing oxidoreductase srdB to yield the epoxide, which can be hydrolyzed stereoselectively by the hydrolase srdG to give the final product sordarial. The chain is Highly reducing polyketide synthase srdA from Neurospora crassa (strain ATCC 24698 / 74-OR23-1A / CBS 708.71 / DSM 1257 / FGSC 987).